Consider the following 269-residue polypeptide: Centromere protein K (269 aa).

The span at 1–10 (MNQEDLDPDS) shows a compositional bias: acidic residues. The segment at 1 to 20 (MNQEDLDPDSTTDVGDVTNT) is disordered. 2 coiled-coil regions span residues 22 to 42 (EELI…QNKL) and 98 to 151 (QKLR…NKVE).

Belongs to the CENP-K/MCM22 family. As to quaternary structure, component of the CENPA-CAD complex, composed of CENPI, CENPK, CENPL, CENPO, CENPP, CENPQ, CENPR and CENPS. The CENPA-CAD complex interacts with the CENPA-NAC complex, at least composed of CENPA, CENPC, CENPH, CENPM, CENPN, CENPT and CENPU. Interacts directly with CENPH. As to expression, detected in several fetal organs with highest levels in fetal liver. In adults, it is weakly expressed in lung and placenta.

The protein resides in the nucleus. It is found in the chromosome. It localises to the centromere. Its subcellular location is the kinetochore. Component of the CENPA-CAD (nucleosome distal) complex, a complex recruited to centromeres which is involved in assembly of kinetochore proteins, mitotic progression and chromosome segregation. May be involved in incorporation of newly synthesized CENPA into centromeres via its interaction with the CENPA-NAC complex. Acts in coordination with KNL1 to recruit the NDC80 complex to the outer kinetochore. The polypeptide is Centromere protein K (CENPK) (Homo sapiens (Human)).